A 198-amino-acid chain; its full sequence is Holliday junction branch migration complex subunit RuvA (198 aa).

Residues 1-61 (MTLYKIGEIV…DYIQQTYGFK (61 aa)) form a domain I region. The tract at residues 62–139 (TFKERLLFTD…KIIQNKEVKK (78 aa)) is domain II. Positions 140–144 (FDDIT) are flexible linker. The segment at 144-198 (TNIKELKQTLNKLGFKASDIDYAVNNISSTKELDLMVEESINLITTQMHANNQTT) is domain III.

It belongs to the RuvA family. As to quaternary structure, homotetramer. Forms an RuvA(8)-RuvB(12)-Holliday junction (HJ) complex. HJ DNA is sandwiched between 2 RuvA tetramers; dsDNA enters through RuvA and exits via RuvB. An RuvB hexamer assembles on each DNA strand where it exits the tetramer. Each RuvB hexamer is contacted by two RuvA subunits (via domain III) on 2 adjacent RuvB subunits; this complex drives branch migration. In the full resolvosome a probable DNA-RuvA(4)-RuvB(12)-RuvC(2) complex forms which resolves the HJ.

Its subcellular location is the cytoplasm. The RuvA-RuvB-RuvC complex processes Holliday junction (HJ) DNA during genetic recombination and DNA repair, while the RuvA-RuvB complex plays an important role in the rescue of blocked DNA replication forks via replication fork reversal (RFR). RuvA specifically binds to HJ cruciform DNA, conferring on it an open structure. The RuvB hexamer acts as an ATP-dependent pump, pulling dsDNA into and through the RuvAB complex. HJ branch migration allows RuvC to scan DNA until it finds its consensus sequence, where it cleaves and resolves the cruciform DNA. This chain is Holliday junction branch migration complex subunit RuvA, found in Mycoplasmopsis synoviae (strain 53) (Mycoplasma synoviae).